Here is a 106-residue protein sequence, read N- to C-terminus: Iron-sulfur cluster assembly protein CyaY (106 aa).

It belongs to the frataxin family.

Functionally, involved in iron-sulfur (Fe-S) cluster assembly. May act as a regulator of Fe-S biogenesis. The protein is Iron-sulfur cluster assembly protein CyaY of Salmonella agona (strain SL483).